Consider the following 806-residue polypeptide: WEB family protein At3g02930, chloroplastic (806 aa).

Residues 1–78 constitute a chloroplast transit peptide; the sequence is MASKIKNGLS…PTPPEKTQIR (78 aa). Disordered regions lie at residues 1–94 and 380–403; these read MASK…QIKE and KSEQ…EKLK. The segment covering 9-22 has biased composition (low complexity); sequence LSDTTLRKSSSTSL. A compositionally biased stretch (polar residues) spans 34–59; sequence PDSNSPSPTQQQSRLSFERPSSNSKP. 3 coiled-coil regions span residues 88 to 530, 585 to 662, and 698 to 757; these read QSVQ…FESA, DCLK…IEEN, and ETLD…EDLN. Residues 391 to 403 are compositionally biased toward basic and acidic residues; it reads ESSKSEKEAEKLK. Disordered regions lie at residues 684–725 and 746–777; these read ENGY…EDET and KESA…EDEL. 2 stretches are compositionally biased toward basic and acidic residues: residues 685–699 and 706–725; these read NGYR…KVET and KLEE…EDET. Over residues 759–769 the composition is skewed to polar residues; that stretch reads VDQSQKTSPVN.

The protein belongs to the WEB family.

Its subcellular location is the plastid. The protein resides in the chloroplast. In Arabidopsis thaliana (Mouse-ear cress), this protein is WEB family protein At3g02930, chloroplastic.